The following is a 200-amino-acid chain: Dephospho-CoA kinase (200 aa).

The region spanning 3–200 (RIGLTGGIGS…LIAEILSRVN (198 aa)) is the DPCK domain. 11 to 16 (GSGKST) contacts ATP.

Belongs to the CoaE family.

It is found in the cytoplasm. The catalysed reaction is 3'-dephospho-CoA + ATP = ADP + CoA + H(+). Its pathway is cofactor biosynthesis; coenzyme A biosynthesis; CoA from (R)-pantothenate: step 5/5. Its function is as follows. Catalyzes the phosphorylation of the 3'-hydroxyl group of dephosphocoenzyme A to form coenzyme A. The sequence is that of Dephospho-CoA kinase from Corynebacterium glutamicum (strain ATCC 13032 / DSM 20300 / JCM 1318 / BCRC 11384 / CCUG 27702 / LMG 3730 / NBRC 12168 / NCIMB 10025 / NRRL B-2784 / 534).